The following is a 450-amino-acid chain: Tol-Pal system protein TolB (450 aa).

Residues 1-47 (MRKLWAPNWLSAKRHHANQAATRLIGRHALMAWLAAALALSAGAAQA) form the signal peptide.

The protein belongs to the TolB family. As to quaternary structure, the Tol-Pal system is composed of five core proteins: the inner membrane proteins TolA, TolQ and TolR, the periplasmic protein TolB and the outer membrane protein Pal. They form a network linking the inner and outer membranes and the peptidoglycan layer.

Its subcellular location is the periplasm. In terms of biological role, part of the Tol-Pal system, which plays a role in outer membrane invagination during cell division and is important for maintaining outer membrane integrity. In Cupriavidus pinatubonensis (strain JMP 134 / LMG 1197) (Cupriavidus necator (strain JMP 134)), this protein is Tol-Pal system protein TolB.